A 379-amino-acid chain; its full sequence is Succinyl-diaminopimelate desuccinylase (379 aa).

A Zn(2+)-binding site is contributed by His-68. Asp-70 is a catalytic residue. Residue Asp-101 coordinates Zn(2+). Catalysis depends on Glu-134, which acts as the Proton acceptor. Residues Glu-135, Glu-163, and His-352 each contribute to the Zn(2+) site.

Belongs to the peptidase M20A family. DapE subfamily. Homodimer. It depends on Zn(2+) as a cofactor. The cofactor is Co(2+).

It carries out the reaction N-succinyl-(2S,6S)-2,6-diaminopimelate + H2O = (2S,6S)-2,6-diaminopimelate + succinate. It functions in the pathway amino-acid biosynthesis; L-lysine biosynthesis via DAP pathway; LL-2,6-diaminopimelate from (S)-tetrahydrodipicolinate (succinylase route): step 3/3. In terms of biological role, catalyzes the hydrolysis of N-succinyl-L,L-diaminopimelic acid (SDAP), forming succinate and LL-2,6-diaminopimelate (DAP), an intermediate involved in the bacterial biosynthesis of lysine and meso-diaminopimelic acid, an essential component of bacterial cell walls. This is Succinyl-diaminopimelate desuccinylase from Dinoroseobacter shibae (strain DSM 16493 / NCIMB 14021 / DFL 12).